Reading from the N-terminus, the 561-residue chain is Centromere protein T (561 aa).

Residues 1 to 78 form a disordered region; sequence MADHNPDGDP…IGRSAHVQAR (78 aa). Over residues 18 to 27 the composition is skewed to basic and acidic residues; the sequence is RVLDTADPRT. The segment covering 45–57 has biased composition (polar residues); that stretch reads TASSRRLSGQTKT. A Phosphoserine modification is found at Ser-47. Residue Thr-85 is modified to Phosphothreonine. Positions 93–421 are flexible stalk domain; the sequence is ILLTAPESSI…RHHQFPEPAP (329 aa). 3 disordered regions span residues 114 to 134, 256 to 293, and 314 to 457; these read APQV…ELQL, HSLP…GKPA, and SSGV…DPHK. The segment covering 276–289 has biased composition (polar residues); the sequence is RTQSSGPGLQNNSP. The span at 329–341 shows a compositional bias: basic and acidic residues; the sequence is GVEEAEKKMKEEG. Ser-343, Ser-345, Ser-356, Ser-373, Ser-385, Ser-386, and Ser-397 each carry phosphoserine. Over residues 365 to 376 the composition is skewed to polar residues; sequence TQVTEAEGSQGT. Positions 439 to 450 are enriched in low complexity; sequence RCPPRSRTTGPR.

The protein belongs to the CENP-T/CNN1 family. As to quaternary structure, component of the CENPA-CAD complex, composed of CENPI, CENPK, CENPL, CENPO, CENPP, CENPQ, CENPR and CENPS. The CENPA-CAD complex is probably recruited on centromeres by the CENPA-NAC complex, at least composed of CENPA, CENPC, CENPH, CENPM, CENPN, CENPT and CENPU. Identified in a centromeric complex containing histones H2A, H2B, H3 and H4, and at least CENPA, CENPB, CENPC, CENPT, CENPN, HJURP, SUPT16H, SSRP1 and RSF1. Interacts (via N-terminus) with the NDC80 complex. Heterodimer with CENPW; this dimer coassembles with CENPS-CENPX heterodimers at centromeres to form the tetrameric CENP-T-W-S-X complex. Dynamically phosphorylated during the cell cycle. Phosphorylated during G2 phase, metaphase and anaphase, but not during telophase or G1 phase.

Its subcellular location is the nucleus. It localises to the chromosome. It is found in the centromere. The protein resides in the kinetochore. Functionally, component of the CENPA-NAC (nucleosome-associated) complex, a complex that plays a central role in assembly of kinetochore proteins, mitotic progression and chromosome segregation. The CENPA-NAC complex recruits the CENPA-CAD (nucleosome distal) complex and may be involved in incorporation of newly synthesized CENPA into centromeres. Part of a nucleosome-associated complex that binds specifically to histone H3-containing nucleosomes at the centromere, as opposed to nucleosomes containing CENPA. Component of the heterotetrameric CENP-T-W-S-X complex that binds and supercoils DNA, and plays an important role in kinetochore assembly. CENPT has a fundamental role in kinetochore assembly and function. It is one of the inner kinetochore proteins, with most further proteins binding downstream. Required for normal chromosome organization and normal progress through mitosis. This Macaca fascicularis (Crab-eating macaque) protein is Centromere protein T (CENPT).